We begin with the raw amino-acid sequence, 242 residues long: Uridylate kinase (242 aa).

ATP is bound at residue 15 to 18; that stretch reads KLSG. Residue glycine 57 participates in UMP binding. ATP is bound by residues glycine 58 and arginine 62. Residues aspartate 78 and 139-146 contribute to the UMP site; that span reads TGNPFFTT. ATP-binding residues include threonine 166, tyrosine 172, and aspartate 175.

It belongs to the UMP kinase family. Homohexamer.

The protein localises to the cytoplasm. It catalyses the reaction UMP + ATP = UDP + ADP. Its pathway is pyrimidine metabolism; CTP biosynthesis via de novo pathway; UDP from UMP (UMPK route): step 1/1. With respect to regulation, inhibited by UTP. Functionally, catalyzes the reversible phosphorylation of UMP to UDP. This is Uridylate kinase from Acinetobacter baumannii (strain ATCC 17978 / DSM 105126 / CIP 53.77 / LMG 1025 / NCDC KC755 / 5377).